A 154-amino-acid polypeptide reads, in one-letter code: Xanthine-guanine phosphoribosyltransferase (154 aa).

Residues 37–38 (RG), arginine 69, and 88–96 (EDLVDSGDT) each bind 5-phospho-alpha-D-ribose 1-diphosphate. Arginine 69 is a GMP binding site. Residue aspartate 89 participates in Mg(2+) binding. Residues aspartate 92 and isoleucine 135 each contribute to the guanine site. The xanthine site is built by aspartate 92 and isoleucine 135. GMP contacts are provided by residues 92-96 (DSGDT) and 134-135 (WI).

This sequence belongs to the purine/pyrimidine phosphoribosyltransferase family. XGPT subfamily. In terms of assembly, homotetramer. Requires Mg(2+) as cofactor.

The protein resides in the cell inner membrane. The catalysed reaction is GMP + diphosphate = guanine + 5-phospho-alpha-D-ribose 1-diphosphate. It catalyses the reaction XMP + diphosphate = xanthine + 5-phospho-alpha-D-ribose 1-diphosphate. It carries out the reaction IMP + diphosphate = hypoxanthine + 5-phospho-alpha-D-ribose 1-diphosphate. It functions in the pathway purine metabolism; GMP biosynthesis via salvage pathway; GMP from guanine: step 1/1. It participates in purine metabolism; XMP biosynthesis via salvage pathway; XMP from xanthine: step 1/1. Purine salvage pathway enzyme that catalyzes the transfer of the ribosyl-5-phosphate group from 5-phospho-alpha-D-ribose 1-diphosphate (PRPP) to the N9 position of the 6-oxopurines guanine and xanthine to form the corresponding ribonucleotides GMP (guanosine 5'-monophosphate) and XMP (xanthosine 5'-monophosphate), with the release of PPi. To a lesser extent, also acts on hypoxanthine. The chain is Xanthine-guanine phosphoribosyltransferase from Vibrio campbellii (strain ATCC BAA-1116).